A 402-amino-acid polypeptide reads, in one-letter code: Type II NADH:quinone oxidoreductase (402 aa).

Residues 12–16 (GAGYA), 39–40 (NK), and Val-83 each bind FAD. Glu-172 is an active-site residue. Residues Asp-302, 319–320 (AQ), and Lys-379 each bind FAD.

It belongs to the NADH dehydrogenase family. As to quaternary structure, homodimer in solution. Forms homotetramers; dimer of dimers. The cofactor is FAD.

It is found in the cell membrane. The enzyme catalyses a quinone + NADH + H(+) = a quinol + NAD(+). It carries out the reaction a menaquinone + NADH + H(+) = a menaquinol + NAD(+). It catalyses the reaction a ubiquinone + NADH + H(+) = a ubiquinol + NAD(+). Inhibited by HQNO, a quinone derivative. Its function is as follows. Alternative, nonproton pumping NADH:quinone oxidoreductase that delivers electrons to the respiratory chain by oxidation of NADH and reduction of quinones, and contributes to the regeneration of NAD(+). Can use DMN, a menaquinone analog, 2,3-dimethoxy-5,6-dimethyl-benzoquinone (DDB), an ubiquinone analog, or 2,3,5,6-tetramethyl-1,4-benzoquinone (Duroquinone, DQ) a plastoquinone analog as electron acceptors. This chain is Type II NADH:quinone oxidoreductase, found in Staphylococcus aureus (strain NCTC 8325 / PS 47).